The primary structure comprises 203 residues: ATP-dependent Clp protease proteolytic subunit (203 aa).

The active-site Nucleophile is S107. The active site involves H132.

The protein belongs to the peptidase S14 family. As to quaternary structure, fourteen ClpP subunits assemble into 2 heptameric rings which stack back to back to give a disk-like structure with a central cavity, resembling the structure of eukaryotic proteasomes.

The protein resides in the cytoplasm. The catalysed reaction is Hydrolysis of proteins to small peptides in the presence of ATP and magnesium. alpha-casein is the usual test substrate. In the absence of ATP, only oligopeptides shorter than five residues are hydrolyzed (such as succinyl-Leu-Tyr-|-NHMec, and Leu-Tyr-Leu-|-Tyr-Trp, in which cleavage of the -Tyr-|-Leu- and -Tyr-|-Trp bonds also occurs).. Its function is as follows. Cleaves peptides in various proteins in a process that requires ATP hydrolysis. Has a chymotrypsin-like activity. Plays a major role in the degradation of misfolded proteins. The protein is ATP-dependent Clp protease proteolytic subunit of Thermotoga maritima (strain ATCC 43589 / DSM 3109 / JCM 10099 / NBRC 100826 / MSB8).